Consider the following 1218-residue polypeptide: DNA polymerase subunit gamma-1 (1218 aa).

The interval 31 to 50 (LDPVPSDGRPPSQMPSSENG) is disordered. The Exo I signature appears at 179-183 (VFDVE). The active-site Exonuclease activity is Asp181. The Exo II signature appears at 250-258 (VGHNVSFDR). Ser289 lines the DNA pocket. Positions 378–386 (YCARDVWAT) match the Exo III motif. Positions 484-524 (KKVKKPASASKLPIEGAGPFGDPMDQEDPGPPSEEEELQRS) are disordered. The accessory-interacting determinant stretch occupies residues 492 to 553 (ASKLPIEGAG…RPQHLPGHPG (62 aa)). Positions 507 to 520 (MDQEDPGPPSEEEE) are enriched in acidic residues. Arg561 contacts RNA. DNA is bound at residue Ser575. RNA is bound by residues His733, Gly742, and Lys747. DNA contacts are provided by Lys785 and Thr828. Residues 837–843 (TWLTASN) are trigger loop. Positions 842 and 848 each coordinate RNA. A Pol A motif is present at residues 866–875 (VGADVDSQEL). Positions 869, 870, 872, 874, 922, 926, and 930 each coordinate a 2'-deoxyribonucleoside 5'-triphosphate. Mg(2+) is bound by residues Asp869 and Val870. Residues 922-937 (REHAKIFNYGRIYGAG) carry the Pol B motif. Residues Thr1073 and Ser1074 each coordinate DNA. Residues 1113–1120 (HDEVRYLV) carry the Pol C motif. Residue Asp1114 participates in a 2'-deoxyribonucleoside 5'-triphosphate binding. Asp1114 lines the Mg(2+) pocket.

Belongs to the DNA polymerase type-A family. In terms of assembly, heterotrimer composed of a catalytic subunit and a homodimer of accessory subunits (POLG:POLG2). Interacts with TTC3. Interacts with LIG3. Mg(2+) is required as a cofactor.

Its subcellular location is the mitochondrion. It localises to the mitochondrion matrix. It is found in the mitochondrion nucleoid. It carries out the reaction DNA(n) + a 2'-deoxyribonucleoside 5'-triphosphate = DNA(n+1) + diphosphate. The catalysed reaction is a 3'-end 2'-deoxyribonucleotidyl-deoxyribonucleotide-DNA + H2O = a 3'-end 2'-deoxyribonucleotide-DNA + a 2'-deoxyribonucleoside 5'-phosphate + H(+). The enzyme catalyses a 5'-end 2'-deoxyribose-2'-deoxyribonucleotide-DNA = (2E,4S)-4-hydroxypenten-2-al-5-phosphate + a 5'-end 5'-phospho-2'-deoxyribonucleoside-DNA + H(+). Its activity is regulated as follows. Inhibited by dideoxynucleotides such as antiviral agent zalcitabine. Its function is as follows. Catalytic subunit of DNA polymerase gamma solely responsible for replication of mitochondrial DNA (mtDNA). Replicates both heavy and light strands of the circular mtDNA genome using a single-stranded DNA template, RNA primers and the four deoxyribonucleoside triphosphates as substrates. Has 5' -&gt; 3' polymerase activity. Functionally interacts with TWNK and SSBP1 at the replication fork to form a highly processive replisome, where TWNK unwinds the double-stranded DNA template prior to replication and SSBP1 covers the parental heavy strand to enable continuous replication of the entire mitochondrial genome. A single nucleotide incorporation cycle includes binding of the incoming nucleotide at the insertion site, a phosphodiester bond formation reaction that extends the 3'-end of the primer DNA, and translocation of the primer terminus to the post-insertion site. After completing replication of a mtDNA strand, mediates 3' -&gt; 5' exonucleolytic degradation at the nick to enable proper ligation. Highly accurate due to high nucleotide selectivity and 3' -&gt; 5' exonucleolytic proofreading. Proficiently corrects base substitutions, single-base additions and deletions in non-repetitive sequences and short repeats, but displays lower proofreading activity when replicating longer homopolymeric stretches. Exerts exonuclease activity toward single-stranded DNA and double-stranded DNA containing 3'-terminal mispairs. When a misincorporation occurs, transitions from replication to a pro-nucleolytic editing mode and removes the missincorporated nucleoside in the exonuclease active site. Proceeds via an SN2 nucleolytic mechanism in which Asp-198 catalyzes phosphodiester bond hydrolysis and Glu-200 stabilizes the leaving group. As a result the primer strand becomes one nucleotide shorter and is positioned in the post-insertion site, ready to resume DNA synthesis. Exerts 5'-deoxyribose phosphate (dRP) lyase activity and mediates repair-associated mtDNA synthesis (gap filling) in base-excision repair pathway. Catalyzes the release of the 5'-terminal 2-deoxyribose-5-phosphate sugar moiety from incised apurinic/apyrimidinic (AP) sites to produce a substrate for DNA ligase. The dRP lyase reaction does not require divalent metal ions and likely proceeds via a Schiff base intermediate in a beta-elimination reaction mechanism. The polypeptide is DNA polymerase subunit gamma-1 (Mus musculus (Mouse)).